A 138-amino-acid chain; its full sequence is Small ribosomal subunit protein uS11c (138 aa).

The disordered stretch occupies residues 1–24 (MAKPIPKVGSRRNGRSSARKSARR). The segment covering 9–24 (GSRRNGRSSARKSARR) has biased composition (basic residues).

The protein belongs to the universal ribosomal protein uS11 family. As to quaternary structure, part of the 30S ribosomal subunit.

The protein resides in the plastid. Its subcellular location is the chloroplast. The chain is Small ribosomal subunit protein uS11c from Gossypium hirsutum (Upland cotton).